The following is a 239-amino-acid chain: MKIDILTLFPEMFSPLEHSIVGKAREKGLLDIQYHNFRENAEKARHVDDEPYGGGQGMLLRVQPIFDSFDAIEKKNPRVILLDPAGKQFDQAYAEDLAQEEELIFICGHYEGYDERIKTLVTDEISLGDYVLTGGELAAMTMIDATVRLIPEVIGKESSHQDDSFSSGLLEYPQYTRPYDYRGMVVPDVLMSGHHEKIRQWRLYESLKKTYERRPDLLEHYQLTVEEEKMLAEIKENKE.

Residues Gly108 and 127–132 (LGDYVL) each bind S-adenosyl-L-methionine.

Belongs to the RNA methyltransferase TrmD family. In terms of assembly, homodimer.

Its subcellular location is the cytoplasm. It catalyses the reaction guanosine(37) in tRNA + S-adenosyl-L-methionine = N(1)-methylguanosine(37) in tRNA + S-adenosyl-L-homocysteine + H(+). Specifically methylates guanosine-37 in various tRNAs. This is tRNA (guanine-N(1)-)-methyltransferase from Streptococcus pneumoniae serotype 2 (strain D39 / NCTC 7466).